The sequence spans 1381 residues: DNA-directed RNA polymerase subunit beta'' (1381 aa).

Zn(2+)-binding residues include Cys-224, Cys-296, Cys-303, and Cys-306.

Belongs to the RNA polymerase beta' chain family. RpoC2 subfamily. In terms of assembly, in plastids the minimal PEP RNA polymerase catalytic core is composed of four subunits: alpha, beta, beta', and beta''. When a (nuclear-encoded) sigma factor is associated with the core the holoenzyme is formed, which can initiate transcription. The cofactor is Zn(2+).

Its subcellular location is the plastid. The protein resides in the chloroplast. The enzyme catalyses RNA(n) + a ribonucleoside 5'-triphosphate = RNA(n+1) + diphosphate. DNA-dependent RNA polymerase catalyzes the transcription of DNA into RNA using the four ribonucleoside triphosphates as substrates. In Drimys granadensis, this protein is DNA-directed RNA polymerase subunit beta''.